The sequence spans 251 residues: 5'-nucleotidase SurE (251 aa).

A divalent metal cation is bound by residues Asp-8, Asp-9, Ser-39, and Asn-91.

It belongs to the SurE nucleotidase family. It depends on a divalent metal cation as a cofactor.

The protein localises to the cytoplasm. It catalyses the reaction a ribonucleoside 5'-phosphate + H2O = a ribonucleoside + phosphate. Its function is as follows. Nucleotidase that shows phosphatase activity on nucleoside 5'-monophosphates. The sequence is that of 5'-nucleotidase SurE from Nitrosococcus oceani (strain ATCC 19707 / BCRC 17464 / JCM 30415 / NCIMB 11848 / C-107).